We begin with the raw amino-acid sequence, 121 residues long: Small ribosomal subunit protein uS13 (121 aa).

A disordered region spans residues 95–121 (LPVRGQNTKNNARTRKGKAVAIAGKKK). The segment covering 106 to 121 (ARTRKGKAVAIAGKKK) has biased composition (basic residues).

It belongs to the universal ribosomal protein uS13 family. Part of the 30S ribosomal subunit. Forms a loose heterodimer with protein S19. Forms two bridges to the 50S subunit in the 70S ribosome.

Located at the top of the head of the 30S subunit, it contacts several helices of the 16S rRNA. In the 70S ribosome it contacts the 23S rRNA (bridge B1a) and protein L5 of the 50S subunit (bridge B1b), connecting the 2 subunits; these bridges are implicated in subunit movement. Contacts the tRNAs in the A and P-sites. The sequence is that of Small ribosomal subunit protein uS13 from Streptococcus equi subsp. zooepidemicus (strain H70).